Reading from the N-terminus, the 695-residue chain is Sodium-dependent phosphate transport protein 2B (695 aa).

The disordered stretch occupies residues 1–44 (MAPWPELENAHPNPNKFIEGASGPQSSIPDKDKGTSKTNDSGTP). The Cytoplasmic portion of the chain corresponds to 1–90 (MAPWPELENA…KWSERDSKGK (90 aa)). Residues 91-111 (ILCIFQGIGKFILLLGFLYLF) form a helical membrane-spanning segment. At 112–136 (VCSLDVLSSAFQLVGGKMAGQFFSN) the chain is on the extracellular side. A helical transmembrane segment spans residues 137–157 (NSIMSNPVAGLVIGVLVTVMV). Topologically, residues 158-213 (QSSSTSSSIIVSMVASSLLSVRAAIPIIMGANIGTSITNTIVALMQAGDRNEFRRA) are cytoplasmic. A helical transmembrane segment spans residues 214–234 (FAGATVHDFFNWLSVLVLLPL). Residues 235 to 363 (EAATHYLEKL…FVNFSLPDLA (129 aa)) are Extracellular-facing. 5 N-linked (GlcNAc...) asparagine glycosylation sites follow: N295, N313, N321, N340, and N356. C303 and C350 are oxidised to a cystine. A helical transmembrane segment spans residues 364-384 (VGIILLTVSLLILCGCLIMIV). The Cytoplasmic segment spans residues 385–408 (KLLGSVLRGQVATVIKKTLNTDFP). A helical transmembrane segment spans residues 409–429 (FPFAWLTGYLAILVGAGMTFI). Residues 430–486 (VQSSSVFTSAMTPLIGIGVISIERAYPLTLGSNIGTTTTAILAALASPGNTLRSSLQ) are Extracellular-facing. The helical transmembrane segment at 487 to 507 (IALCHFFFNISGILLWYPIPF) threads the bilayer. At 508–526 (TRLPIRLAKGLGNISAKYR) the chain is on the cytoplasmic side. The helical transmembrane segment at 527-547 (WFAVFYLIFFFLLTPLTVFGL) threads the bilayer. Residues 548-551 (SLAG) lie on the Extracellular side of the membrane. Residues 552–572 (WPVLVGVGVPIILLILLVLCL) form a helical membrane-spanning segment. Residues 573–695 (RMLQARCPRI…MKALSNTTVF (123 aa)) are Cytoplasmic-facing.

This sequence belongs to the SLC34A transporter family. Highly expressed in the lung, in type II alveolar cells. Moderately expressed in kidney followed by small intestine.

Its subcellular location is the apical cell membrane. The enzyme catalyses 3 Na(+)(out) + phosphate(out) = 3 Na(+)(in) + phosphate(in). Involved in actively transporting phosphate into cells via Na(+) cotransport. This is Sodium-dependent phosphate transport protein 2B (Slc34a2) from Rattus norvegicus (Rat).